The chain runs to 308 residues: Very-long-chain enoyl-CoA reductase (308 aa).

Residues M1 to S86 lie on the Cytoplasmic side of the membrane. N6-acetyllysine is present on K22. S58 carries the post-translational modification Phosphoserine. K60 is modified (N6-acetyllysine). The helical transmembrane segment at W87 to Y106 threads the bilayer. Residues F107–H124 lie on the Lumenal side of the membrane. The helical transmembrane segment at T125–F147 threads the bilayer. Over V148–L158 the chain is Cytoplasmic. A helical membrane pass occupies residues R159–N180. Residues H181–Y189 are Lumenal-facing. A helical membrane pass occupies residues G190–R216. Residues D217–C245 lie on the Cytoplasmic side of the membrane. Residues P246 to T262 form a helical membrane-spanning segment. Residues Q263–C264 are Lumenal-facing. Residues V265–E292 traverse the membrane as a helical segment. Topologically, residues F293 to L308 are cytoplasmic.

Belongs to the steroid 5-alpha reductase family. As to quaternary structure, interacts with ELOVL1 and LASS2. Post-translationally, glycosylated. Expressed at high levels in brain and is also found at lower levels in several other tissues.

The protein localises to the endoplasmic reticulum membrane. The enzyme catalyses a very-long-chain 2,3-saturated fatty acyl-CoA + NADP(+) = a very-long-chain (2E)-enoyl-CoA + NADPH + H(+). It carries out the reaction octadecanoyl-CoA + NADP(+) = (2E)-octadecenoyl-CoA + NADPH + H(+). The catalysed reaction is (2E,7Z,10Z,13Z,16Z)-docosapentaenoyl-CoA + NADPH + H(+) = (7Z,10Z,13Z,16Z)-docosatetraenoyl-CoA + NADP(+). It catalyses the reaction (2E,7Z,10Z,13Z,16Z,19Z)-docosahexaenoyl-CoA + NADPH + H(+) = (7Z,10Z,13Z,16Z,19Z)-docosapentaenoyl-CoA + NADP(+). The enzyme catalyses (2E,8Z,11Z,14Z)-eicosatetraenoyl-CoA + NADPH + H(+) = (8Z,11Z,14Z)-eicosatrienoyl-CoA + NADP(+). It carries out the reaction (2E)-hexadecenoyl-CoA + NADPH + H(+) = hexadecanoyl-CoA + NADP(+). The protein operates within lipid metabolism; fatty acid biosynthesis. It participates in lipid metabolism; sphingolipid metabolism. Its function is as follows. Involved in both the production of very long-chain fatty acids for sphingolipid synthesis and the degradation of the sphingosine moiety in sphingolipids through the sphingosine 1-phosphate metabolic pathway. Catalyzes the last of the four reactions of the long-chain fatty acids elongation cycle. This endoplasmic reticulum-bound enzymatic process, allows the addition of 2 carbons to the chain of long- and very long-chain fatty acids/VLCFAs per cycle. This enzyme reduces the trans-2,3-enoyl-CoA fatty acid intermediate to an acyl-CoA that can be further elongated by entering a new cycle of elongation. Thereby, it participates in the production of VLCFAs of different chain lengths that are involved in multiple biological processes as precursors of membrane lipids and lipid mediators. Catalyzes the saturation step of the sphingosine 1-phosphate metabolic pathway, the conversion of trans-2-hexadecenoyl-CoA to palmitoyl-CoA. This is Very-long-chain enoyl-CoA reductase (Tecr) from Rattus norvegicus (Rat).